The primary structure comprises 189 residues: Peptidyl-tRNA hydrolase (189 aa).

Tyr-14 is a tRNA binding site. The active-site Proton acceptor is the His-19. TRNA is bound by residues Tyr-64, Asn-66, and Asn-112.

The protein belongs to the PTH family. In terms of assembly, monomer.

The protein localises to the cytoplasm. The enzyme catalyses an N-acyl-L-alpha-aminoacyl-tRNA + H2O = an N-acyl-L-amino acid + a tRNA + H(+). Its function is as follows. Hydrolyzes ribosome-free peptidyl-tRNAs (with 1 or more amino acids incorporated), which drop off the ribosome during protein synthesis, or as a result of ribosome stalling. In terms of biological role, catalyzes the release of premature peptidyl moieties from peptidyl-tRNA molecules trapped in stalled 50S ribosomal subunits, and thus maintains levels of free tRNAs and 50S ribosomes. The chain is Peptidyl-tRNA hydrolase from Dehalococcoides mccartyi (strain CBDB1).